A 666-amino-acid polypeptide reads, in one-letter code: Kinesin-like protein Nod (666 aa).

The 313-residue stretch at 8–320 (AVRIAVREAP…LRFGTSAKKL (313 aa)) folds into the Kinesin motor domain. 87–94 (GQTGTGKS) serves as a coordination point for ATP. Residues 423-450 (GFHSDSDKDRHLMPPPTGQEPRQASSQN) form a disordered region. Positions 639-666 (ENLFQVKSLPIWSGNKWERFCQINCLDT) form a coiled coil.

This sequence belongs to the TRAFAC class myosin-kinesin ATPase superfamily. Kinesin family. As to expression, in adult female, found in meiotically active ovaries.

Its subcellular location is the cytoplasm. The protein localises to the cytoskeleton. In terms of biological role, required for the distributive chromosome segregation of non-exchange chromosomes during meiosis. May be a microtubule motor required to hold distributively 'paired' chromosomes at the metaphase plate until anaphase. The sequence is that of Kinesin-like protein Nod (nod) from Drosophila melanogaster (Fruit fly).